Consider the following 261-residue polypeptide: Ribosome biogenesis protein NSA2 (261 aa).

A compositionally biased stretch (basic and acidic residues) spans 1-40 (MPQNDYIERHIKQHGKRLDHEERKRKREARESHKISERAQ). Positions 1–43 (MPQNDYIERHIKQHGKRLDHEERKRKREARESHKISERAQKLT) are disordered. 2 consecutive short sequence motifs (nuclear localization signal) follow at residues 15–22 (GKRLDHEE) and 51–58 (AKKRYAEK). The tract at residues 61 to 87 (MRKKIKAHEQSKVKGSSKPLDTDGDAL) is disordered.

Belongs to the eukaryotic ribosomal protein eS8 family. Ribosome biogenesis protein NSA2 subfamily. As to quaternary structure, component of the pre-66S ribosomal particle. Interacts with NOP7 and RRP1. Interacts with RSA4 (via WD repeats).

It localises to the nucleus. The protein localises to the nucleolus. Its function is as follows. Involved in the biogenesis of the 60S ribosomal subunit. May play a part in the quality control of pre-60S particles. Under normal, rapid growth conditions, high levels of NSA2 would allow the progression of pre-60S particles through the ITS2 processing. This is Ribosome biogenesis protein NSA2 (NSA2) from Saccharomyces cerevisiae (strain YJM789) (Baker's yeast).